A 192-amino-acid chain; its full sequence is Akirin-1 (192 aa).

The disordered stretch occupies residues 17–71 (LLSPGSPKRRRCAPLPGPTPGLRPPDAEPPPPFQTQTPPQSLQQPAPPGSERRLP). The residue at position 22 (serine 22) is a Phosphoserine. Residues 23 to 28 (PKRRRC) carry the Nuclear localization signal motif. The span at 31–49 (LPGPTPGLRPPDAEPPPPF) shows a compositional bias: pro residues. Residues 50–60 (QTQTPPQSLQQ) show a composition bias toward low complexity. Threonine 72 carries the phosphothreonine modification. The segment covering 104 to 122 (ASESQPHSSALTAPSSPGS) has biased composition (polar residues). The tract at residues 104-127 (ASESQPHSSALTAPSSPGSSWMKK) is disordered. An SYVS motif motif is present at residues 189 to 192 (SYVS).

This sequence belongs to the akirin family. Widely expressed with the highest expression in heart, liver, placenta and peripheral blood leukocytes.

It localises to the nucleus. Molecular adapter that acts as a bridge between proteins, and which is involved skeletal muscle development. Functions as a signal transducer for MSTN during skeletal muscle regeneration and myogenesis. May regulate chemotaxis of both macrophages and myoblasts by reorganising actin cytoskeleton, leading to more efficient lamellipodia formation via a PI3 kinase dependent pathway. In contrast to AKIRIN2, not involved in nuclear import of proteasomes. The sequence is that of Akirin-1 from Homo sapiens (Human).